Here is a 367-residue protein sequence, read N- to C-terminus: (E)-2-epi-beta-caryophyllene synthase (367 aa).

Positions 93, 234, and 238 each coordinate Mg(2+). The short motif at 93 to 97 (DDIAE) is the DDXXE motif element.

It belongs to the terpene synthase family. The cofactor is Mg(2+). Mn(2+) is required as a cofactor.

It catalyses the reaction (2E,6E)-farnesyl diphosphate = (E)-2-epi-beta-caryophyllene + diphosphate. Its pathway is secondary metabolite biosynthesis; terpenoid biosynthesis. Sesquiterpene synthase converting farnesyl diphosphate to (E)-2-epi-beta-caryophyllene as the major product, and to two other unidentified sesquiterpenes. Has no diterpene synthase activity. The sequence is that of (E)-2-epi-beta-caryophyllene synthase from Selaginella moellendorffii (Spikemoss).